A 128-amino-acid polypeptide reads, in one-letter code: Riboflavin kinase (128 aa).

12 to 17 (GKGEGK) is a binding site for CDP. Thr-41 and Asn-43 together coordinate Mg(2+). Residues Thr-97 and Glu-105 each coordinate FMN. 110–113 (IKLR) is a binding site for CDP.

Belongs to the archaeal riboflavin kinase family. Requires Mg(2+) as cofactor.

The enzyme catalyses riboflavin + CTP = CDP + FMN + H(+). The protein operates within cofactor biosynthesis; FMN biosynthesis; FMN from riboflavin (CTP route): step 1/1. Catalyzes the CTP-dependent phosphorylation of riboflavin (vitamin B2) to form flavin mononucleotide (FMN). This chain is Riboflavin kinase, found in Methanococcus aeolicus (strain ATCC BAA-1280 / DSM 17508 / OCM 812 / Nankai-3).